We begin with the raw amino-acid sequence, 305 residues long: Putative F-box protein PP2-B8 (305 aa).

One can recognise an F-box domain in the interval Val33–Phe79.

The protein is Putative F-box protein PP2-B8 (PP2B8) of Arabidopsis thaliana (Mouse-ear cress).